The sequence spans 431 residues: Glutamate-1-semialdehyde 2,1-aminomutase (431 aa).

Lys269 carries the N6-(pyridoxal phosphate)lysine modification.

It belongs to the class-III pyridoxal-phosphate-dependent aminotransferase family. HemL subfamily. As to quaternary structure, homodimer. It depends on pyridoxal 5'-phosphate as a cofactor.

It localises to the cytoplasm. It catalyses the reaction (S)-4-amino-5-oxopentanoate = 5-aminolevulinate. It participates in porphyrin-containing compound metabolism; protoporphyrin-IX biosynthesis; 5-aminolevulinate from L-glutamyl-tRNA(Glu): step 2/2. The protein operates within porphyrin-containing compound metabolism; chlorophyll biosynthesis. In Pelodictyon phaeoclathratiforme (strain DSM 5477 / BU-1), this protein is Glutamate-1-semialdehyde 2,1-aminomutase.